Reading from the N-terminus, the 197-residue chain is 3-isopropylmalate dehydratase small subunit (197 aa).

Belongs to the LeuD family. LeuD type 1 subfamily. Heterodimer of LeuC and LeuD.

The catalysed reaction is (2R,3S)-3-isopropylmalate = (2S)-2-isopropylmalate. It functions in the pathway amino-acid biosynthesis; L-leucine biosynthesis; L-leucine from 3-methyl-2-oxobutanoate: step 2/4. Its function is as follows. Catalyzes the isomerization between 2-isopropylmalate and 3-isopropylmalate, via the formation of 2-isopropylmaleate. The chain is 3-isopropylmalate dehydratase small subunit from Mycolicibacterium vanbaalenii (strain DSM 7251 / JCM 13017 / BCRC 16820 / KCTC 9966 / NRRL B-24157 / PYR-1) (Mycobacterium vanbaalenii).